A 320-amino-acid polypeptide reads, in one-letter code: AA9 family lytic polysaccharide monooxygenase-like protein CEL1 (320 aa).

Residues 1–29 form the signal peptide; sequence MRLPSRQQVLKMLATFSLALGLFAAKVQA. Cystine bridges form between cysteine 78–cysteine 199 and cysteine 121–cysteine 126. A Cu(2+)-binding site is contributed by histidine 109. An N-linked (GlcNAc...) asparagine glycan is attached at asparagine 163. 2 residues coordinate O2: histidine 189 and glutamine 194. Cu(2+) is bound at residue tyrosine 196. The segment at 255–284 is disordered; that stretch reads GSGGNGGSPTTTPHTTTPITTSPPPTSTPG. Residues 262–274 are compositionally biased toward low complexity; the sequence is SPTTTPHTTTPIT. The CBM1 domain occupies 284–320; the sequence is GTIPQYGQCGGIGWTGGTGCVAPYQCKVINDYYSQCL.

It belongs to the polysaccharide monooxygenase AA9 family. Cu(2+) is required as a cofactor.

The protein localises to the secreted. The enzyme catalyses [(1-&gt;4)-beta-D-glucosyl]n+m + reduced acceptor + O2 = 4-dehydro-beta-D-glucosyl-[(1-&gt;4)-beta-D-glucosyl]n-1 + [(1-&gt;4)-beta-D-glucosyl]m + acceptor + H2O.. In terms of biological role, lytic polysaccharide monooxygenase (LPMO)-like protein that binds strongly to cellulose. Seems not to acts as an endoglucanase, a ceUobiohydrolase able to hydrolyze fluorogenic cellobiosides, a /3-glucosidase, a xylanase, nor a cellobiose:quinone oxidoreductase. The protein is AA9 family lytic polysaccharide monooxygenase-like protein CEL1 of Agaricus bisporus (White button mushroom).